A 361-amino-acid polypeptide reads, in one-letter code: MKRVSRRAFLRRLGVGVAATAAFSPLAVAQARRYRWRIQTAWDAGTVGYSLFQKFTERVKELTDGQLEVQPFPAGAVVGTFDMFDAVKTGVLDGMNPFTLYWAGRMPVTAFLSSYALGLDRPDQWETWFYSLGGLDIARRAFAEQGLFYVGPVQHDLNIIHSKKPIRRFEDFKGVKLRVPGGMIAEVFAAAGASTVLLPGGEVYPALERGVIDAADFVGPAVNYNLGFHQVAKYIIMGPPETPAIHQPVDLMDFTINLNRWRSLPKPLQERFIAAVHEYSWIHYAGIQKANLEAWPKYRQAGVEVIRLSNEDVRKFRRLAIPIWFKWAKMDKYSREAFASQLEYMKGIGYVTDEELKGLSL.

The tat-type signal signal peptide spans 1–22 (MKRVSRRAFLRRLGVGVAATAA). Residues Tyr-101, Asn-158, and Arg-178 each contribute to the substrate site. Residue Asn-158 coordinates Ca(2+). The Ca(2+) site is built by Asp-216, Phe-217, and Gln-247. Substrate contacts are provided by residues Phe-217 and 247-250 (QPVD).

It belongs to the bacterial solute-binding protein 7 family. Homodimer. The complex comprises the extracytoplasmic solute receptor protein TTHA0766, and the two putative transmembrane proteins TTHA0767 and TTHA0768.

The protein localises to the periplasm. In terms of biological role, part of the tripartite ATP-independent periplasmic (TRAP) transport system involved in the uptake of lactate. This protein specifically binds L-lactate. This is Lactate-binding periplasmic protein TTHA0766 from Thermus thermophilus (strain ATCC 27634 / DSM 579 / HB8).